The following is a 207-amino-acid chain: Glycerol-3-phosphate acyltransferase (207 aa).

The next 5 helical transmembrane spans lie at 3–23, 54–74, 81–101, 122–142, and 158–178; these read LIGLLIVAYLLGAIPNGVWVG, TIVMVLDIAKGSVATLLPIVF, GTATPLLFGLFAVLGHTVSIF, PIMFVIAAGFWVSLIYWTSIV, and LVFQDWYLTGIALVLTVFVFY.

The protein belongs to the PlsY family. In terms of assembly, probably interacts with PlsX.

It is found in the cell membrane. The enzyme catalyses an acyl phosphate + sn-glycerol 3-phosphate = a 1-acyl-sn-glycero-3-phosphate + phosphate. It participates in lipid metabolism; phospholipid metabolism. Its function is as follows. Catalyzes the transfer of an acyl group from acyl-phosphate (acyl-PO(4)) to glycerol-3-phosphate (G3P) to form lysophosphatidic acid (LPA). This enzyme utilizes acyl-phosphate as fatty acyl donor, but not acyl-CoA or acyl-ACP. In Levilactobacillus brevis (strain ATCC 367 / BCRC 12310 / CIP 105137 / JCM 1170 / LMG 11437 / NCIMB 947 / NCTC 947) (Lactobacillus brevis), this protein is Glycerol-3-phosphate acyltransferase.